We begin with the raw amino-acid sequence, 1134 residues long: Tyrosine-protein kinase receptor Tie-1 (1134 aa).

Residues methionine 1–serine 22 form the signal peptide. At valine 23–glutamine 755 the chain is on the extracellular side. The Ig-like C2-type 1 domain maps to cysteine 43 to alanine 123. N-linked (GlcNAc...) asparagine glycans are attached at residues asparagine 81 and asparagine 159. EGF-like domains lie at glycine 212–glutamate 254, alanine 256–glutamine 301, and alanine 303–glutamate 343. Cystine bridges form between cysteine 226-cysteine 235, cysteine 229-cysteine 242, cysteine 244-cysteine 253, cysteine 266-cysteine 276, cysteine 270-cysteine 289, cysteine 291-cysteine 300, cysteine 313-cysteine 325, cysteine 319-cysteine 331, and cysteine 333-cysteine 342. Residues proline 349 to asparagine 440 enclose the Ig-like C2-type 2 domain. Fibronectin type-III domains lie at proline 444–proline 543, glutamine 546–serine 638, and alanine 642–glycine 736. N-linked (GlcNAc...) asparagine glycans are attached at residues asparagine 501, asparagine 592, and asparagine 705. The helical transmembrane segment at glutamine 756–valine 780 threads the bilayer. Over cysteine 781–alanine 1134 the chain is Cytoplasmic. The Protein kinase domain occupies isoleucine 835–valine 1114. ATP-binding positions include isoleucine 841–valine 849 and lysine 866. Aspartate 975 (proton acceptor) is an active-site residue. Residue tyrosine 1003 is modified to Phosphotyrosine; by autocatalysis.

This sequence belongs to the protein kinase superfamily. Tyr protein kinase family. Tie subfamily. In terms of assembly, heterodimer with TEK/TIE2. Interacts with SVEP1 (via C-terminus). Post-translationally, phosphorylated on tyrosine residues in response to ANGPT1, most likely by TEK/TIE2. In terms of tissue distribution, specifically expressed in developing vascular endothelial cells. Abundantly expressed in lung and heart, moderately in brain, liver and kidney, and weakly in thymus, spleen and testis.

It localises to the cell membrane. It catalyses the reaction L-tyrosyl-[protein] + ATP = O-phospho-L-tyrosyl-[protein] + ADP + H(+). In terms of biological role, transmembrane tyrosine-protein kinase that may modulate TEK/TIE2 activity and contribute to the regulation of angiogenesis. This Mus musculus (Mouse) protein is Tyrosine-protein kinase receptor Tie-1 (Tie1).